The sequence spans 179 residues: MVKVANKYAKALFDVSLDTNNLETINEELTVINEAVKDKIEQLKMVDSNPTQTAEQRRELINGVFIDINPYIKNMMYVLADNRHISLIADVFKAFQSLYNGHYNQDFATIESTYELSQEELDKIVKLVTQQTKLSKVIVDTKINPDLIGGFRVKVGTTVLDGSVRNDLVQLQRKFRRVN.

Belongs to the ATPase delta chain family. F-type ATPases have 2 components, F(1) - the catalytic core - and F(0) - the membrane proton channel. F(1) has five subunits: alpha(3), beta(3), gamma(1), delta(1), epsilon(1). F(0) has three main subunits: a(1), b(2) and c(10-14). The alpha and beta chains form an alternating ring which encloses part of the gamma chain. F(1) is attached to F(0) by a central stalk formed by the gamma and epsilon chains, while a peripheral stalk is formed by the delta and b chains.

It is found in the cell membrane. In terms of biological role, f(1)F(0) ATP synthase produces ATP from ADP in the presence of a proton or sodium gradient. F-type ATPases consist of two structural domains, F(1) containing the extramembraneous catalytic core and F(0) containing the membrane proton channel, linked together by a central stalk and a peripheral stalk. During catalysis, ATP synthesis in the catalytic domain of F(1) is coupled via a rotary mechanism of the central stalk subunits to proton translocation. This protein is part of the stalk that links CF(0) to CF(1). It either transmits conformational changes from CF(0) to CF(1) or is implicated in proton conduction. The protein is ATP synthase subunit delta of Staphylococcus aureus (strain bovine RF122 / ET3-1).